The sequence spans 146 residues: Large ribosomal subunit protein bL19 (146 aa).

A disordered region spans residues 119 to 146; that stretch reads DYRKKGEKGVEKVETTPVSADIETQVAE.

The protein belongs to the bacterial ribosomal protein bL19 family.

Functionally, this protein is located at the 30S-50S ribosomal subunit interface and may play a role in the structure and function of the aminoacyl-tRNA binding site. This chain is Large ribosomal subunit protein bL19, found in Bartonella tribocorum (strain CIP 105476 / IBS 506).